Consider the following 135-residue polypeptide: DNA-binding protein H-NS homolog (135 aa).

The DNA-binding element occupies 112 to 117 (QGRTPS).

This sequence belongs to the histone-like protein H-NS family. Homodimer that oligomerizes on DNA into higher-order complexes that form bridges between disparate regions of DNA compacting it.

The protein resides in the cytoplasm. It localises to the nucleoid. Functionally, a DNA-binding protein implicated in transcriptional repression and chromosome organization and compaction. Binds nucleation sites in AT-rich DNA and bridges them, forming higher-order nucleoprotein complexes and condensing the chromosome. A subset of genes are repressed by H-NS in association with other proteins. This chain is DNA-binding protein H-NS homolog (hns), found in Buchnera aphidicola subsp. Acyrthosiphon pisum (strain APS) (Acyrthosiphon pisum symbiotic bacterium).